A 1266-amino-acid polypeptide reads, in one-letter code: Phosphatidylinositol 3,4,5-trisphosphate 5-phosphatase 2A (1266 aa).

One can recognise an SH2 domain in the interval 15-111 (WMHRDLSRAA…GLVTTLLYPV (97 aa)). Residues 114–123 (EETTEDRDYS) are compositionally biased toward basic and acidic residues. 2 disordered regions span residues 114 to 159 (EETT…NVTA) and 879 to 951 (DMGG…DATT). The span at 136-159 (TASTSSMTGSALVSTDTPPENVTA) shows a compositional bias: polar residues. Basic and acidic residues-rich tracts occupy residues 915 to 924 (RVSEEGEKSS) and 931 to 944 (TKEENTHNRGKQDP). The short motif at 958–961 (NPAY) is the NPXY motif element. The residue at position 961 (Tyr-961) is a Phosphotyrosine. Disordered regions lie at residues 986–1132 (PLAN…SALD) and 1147–1174 (EVEYPSGRERGASQGPTGPQLRGLSFPS). Low complexity predominate over residues 994–1012 (PPAGSVGKSKPPSGSSAQG). The span at 1045-1056 (RPPPDFPPPPLP) shows a compositional bias: pro residues. An SAM domain is found at 1203–1266 (SVDCSVGEWL…LLASLKQQQK (64 aa)).

It belongs to the inositol 1,4,5-trisphosphate 5-phosphatase family. Post-translationally, tyrosine phosphorylated by the members of the SRC family after exposure to a diverse array of extracellular stimuli.

Its subcellular location is the cytoplasm. The protein localises to the cytosol. It localises to the cytoskeleton. The protein resides in the membrane. It is found in the cell projection. Its subcellular location is the filopodium. The protein localises to the lamellipodium. It localises to the nucleus. The protein resides in the nucleus speckle. The enzyme catalyses a 1,2-diacyl-sn-glycero-3-phospho-(1D-myo-inositol-3,4,5-trisphosphate) + H2O = a 1,2-diacyl-sn-glycero-3-phospho-(1D-myo-inositol-3,4-bisphosphate) + phosphate. Its function is as follows. Phosphatidylinositol (PtdIns) phosphatase that specifically hydrolyzes the 5-phosphate of phosphatidylinositol-3,4,5-trisphosphate (PtdIns(3,4,5)P3) to produce PtdIns(3,4)P2, thereby negatively regulating the PI3K (phosphoinositide 3-kinase) pathways. Plays a central role in regulation of PI3K-dependent insulin signaling, although the precise molecular mechanisms and signaling pathways remain unclear. Part of a signaling pathway that regulates actin cytoskeleton remodeling. Required for the maintenance and dynamic remodeling of actin structures as well as in endocytosis, having a major impact on ligand-induced EGFR internalization and degradation. Participates in regulation of cortical and submembraneous actin. Regulates cell adhesion and cell spreading. Acts as a negative regulator of the FC-gamma-RIIA receptor (FCGR2A). Mediates signaling from the FC-gamma-RIIB receptor (FCGR2B), playing a central role in terminating signal transduction from activating immune/hematopoietic cell receptor systems. May also hydrolyze PtdIns(1,3,4,5)P4, and could thus affect the levels of the higher inositol polyphosphates like InsP6. The sequence is that of Phosphatidylinositol 3,4,5-trisphosphate 5-phosphatase 2A (inppl1a) from Danio rerio (Zebrafish).